The primary structure comprises 760 residues: Metal transporter cnnm-2 (760 aa).

Residues 1 to 21 (MIIKVFLRLLLLCAHIVCIDG) form the signal peptide. The Extracellular portion of the chain corresponds to 22 to 153 (KLEIRPVVSG…ETFMPVWAQC (132 aa)). Asn-88 carries an N-linked (GlcNAc...) asparagine glycan. Residues 145-323 (TFMPVWAQCA…MENDACDIDL (179 aa)) form the CNNM transmembrane domain. The chain crosses the membrane as a helical span at residues 154–174 (AILCLLFSISALCSGLTLGLM). At 175–208 (ALTPQELSILMKSGSQREKKHAAAIYPIRCHGNR) the chain is on the cytoplasmic side. Residues 209-229 (LLCTVIIMNVIVNTGITLLFD) traverse the membrane as a helical segment. Asp-230 is a topological domain (extracellular). Residues 231–251 (LAEGLIAFVASTVGIVVFGEI) traverse the membrane as a helical segment. Residues 252 to 261 (LPQSICVKYG) are Cytoplasmic-facing. A helical transmembrane segment spans residues 262–282 (LAVGANTIFITKFFMFLLFPI). Topologically, residues 283 to 760 (TWPLGKILDK…SVEELKPLME (478 aa)) are extracellular. N-linked (GlcNAc...) asparagine glycosylation is found at Asn-302 and Asn-403. CBS domains follow at residues 344–406 (MTDI…NITV) and 442–512 (MVAK…ITDE). N-linked (GlcNAc...) asparagine glycans are attached at residues Asn-528, Asn-592, and Asn-667. Residues 708–734 (DDFGSPTRKASILDSSPNSRKRSSTSV) are disordered.

The protein belongs to the ACDP family.

It is found in the cell membrane. In terms of biological role, probable metal transporter. Probably acts redundantly with the other metal transport proteins cnnm-1, cnnm-3, cnnm-4 and cnnm-5 to regulate Mg(2+) homeostasis. This chain is Metal transporter cnnm-2, found in Caenorhabditis elegans.